The chain runs to 327 residues: MSIAQDRGIVFKLLSIYRAAAGIFMALAQLIVIFFGYCDFKIKGYRIASYNAPTFASSFIILAVCLLLVVVLENPEVKVTNSENSLFSALKQFFRVERKKLISCLILLWSMFLSSFIMSEVVYFMPLFLTLHVNWDTKFQGIAFMVASILGVTGSYFAPKLINVGCSCGRAKDGGLEESDTTGSETVEVKKKDSLYSGQVFLSIFALFVSLLGQAFMIGASEALKHKSMPPTNSGIFFSAGMSITLLGYNFLASSIPALFSMYIDPKLKVQLMPSIGAISGIGKLVAPIVLAALYGTRLGLSIAVGFGMILVAVSIPPLIWLRKKRC.

At Met-1–Ala-19 the chain is on the cytoplasmic side. A helical transmembrane segment spans residues Ala-20 to Phe-40. The Extracellular portion of the chain corresponds to Lys-41 to Asn-51. Residues Ala-52–Leu-72 form a helical membrane-spanning segment. Over Glu-73 to Cys-104 the chain is Cytoplasmic. The chain crosses the membrane as a helical span at residues Leu-105–Met-125. Residues Pro-126–Gly-141 are Extracellular-facing. Residues Ile-142–Ile-162 form a helical membrane-spanning segment. The Cytoplasmic segment spans residues Asn-163–Gln-199. A helical transmembrane segment spans residues Val-200 to Ala-220. The Extracellular segment spans residues Ser-221–Gly-235. The helical transmembrane segment at Ile-236–Ile-256 threads the bilayer. The Cytoplasmic segment spans residues Pro-257 to Ser-275. A helical membrane pass occupies residues Ile-276–Gly-296. The Extracellular portion of the chain corresponds to Thr-297–Gly-300. Residues Leu-301–Trp-321 traverse the membrane as a helical segment. Residues Leu-322–Cys-327 are Cytoplasmic-facing.

Its subcellular location is the membrane. This is an uncharacterized protein from Saccharomyces cerevisiae (strain ATCC 204508 / S288c) (Baker's yeast).